Reading from the N-terminus, the 809-residue chain is MSELIMNEKTDLEPQVPSVLPLLALRDVVVYPHMQIALFVGREKSINAVDVARNSDNLVFVVAQKDSLTEEIDHDNLYQYGTVAKIVQVVNHENDENCIKVLIEGLHRSKLKKIIDEDSYLTAEHELSPMTINVDKATQETRLQELRNLFAQYAEAKLRNARELVAAANKIEDLLQLMFFVATRVPLNIEIKQKFLEYDEFEAHLQELMNYLMNQSAEQQIEQTLHDSVKRQMEKNQREYFLNEKMKVIQRELSDMNGGAEDDVAEIEKRLAEADLPEHVRKKAEAEFRKLKAMQPASSEAAVVRNYLEVILDTPWNKASKVSINLNKAQEILDADHYGLDDVKDRIVEYLAVQSRVKKLKGPILCLVGPPGVGKTSLGESVAKATGREFVRMALGGVRDEAEIRGHRRTYIGAMPGKIVQSLTKVGVKNPLFLLDEIDKMAQDYRGDPASALLEVLDPSQNSKFNDHYLDLDLDLSEVMFICTANSMNIPEALLDRMEVIRLPGYTEDEKVNIAERYLVPKAIKNNGLRPKELTIHEEAIRDIVQRYTREAGVRNLEREVSKIARKVVKEAVSKKSKNLQLDVTSANLPEYLGPHKFDFGMAEDEAQVGRVNGLAWTSVGGELLTIEVAAVKGKGKFITTGSLGDVMKESITTAMTVVRTRADELGIEASRFEETDVHVHLPEGATPKDGPSAGLALTTALVSAFTGIAIRPDIAMTGETSLGGRAMRIGGLKEKLLAAHRGGIKLVFIPQDNVRDLAEIPDNVKEGLEIKAVKSIDEILPLALTSMPKPLPKTPIVKPVEGSKAARH.

A Lon N-terminal domain is found at 20–216 (LPLLALRDVV…ELMNYLMNQS (197 aa)). 369-376 (GPPGVGKT) lines the ATP pocket. Positions 606–787 (EAQVGRVNGL…DEILPLALTS (182 aa)) constitute a Lon proteolytic domain. Residues serine 693 and lysine 736 contribute to the active site.

The protein belongs to the peptidase S16 family. As to quaternary structure, homohexamer. Organized in a ring with a central cavity.

The protein localises to the cytoplasm. The catalysed reaction is Hydrolysis of proteins in presence of ATP.. ATP-dependent serine protease that mediates the selective degradation of mutant and abnormal proteins as well as certain short-lived regulatory proteins. Required for cellular homeostasis and for survival from DNA damage and developmental changes induced by stress. Degrades polypeptides processively to yield small peptide fragments that are 5 to 10 amino acids long. Binds to DNA in a double-stranded, site-specific manner. The sequence is that of Lon protease from Acinetobacter baumannii (strain AB307-0294).